The following is a 237-amino-acid chain: Phosphatidylserine decarboxylase proenzyme (237 aa).

Ser-206 (schiff-base intermediate with substrate; via pyruvic acid) is an active-site residue. Position 206 is a pyruvic acid (Ser); by autocatalysis (Ser-206).

It belongs to the phosphatidylserine decarboxylase family. PSD-A subfamily. Heterodimer of a large membrane-associated beta subunit and a small pyruvoyl-containing alpha subunit. Pyruvate serves as cofactor. In terms of processing, is synthesized initially as an inactive proenzyme. Formation of the active enzyme involves a self-maturation process in which the active site pyruvoyl group is generated from an internal serine residue via an autocatalytic post-translational modification. Two non-identical subunits are generated from the proenzyme in this reaction, and the pyruvate is formed at the N-terminus of the alpha chain, which is derived from the carboxyl end of the proenzyme. The post-translation cleavage follows an unusual pathway, termed non-hydrolytic serinolysis, in which the side chain hydroxyl group of the serine supplies its oxygen atom to form the C-terminus of the beta chain, while the remainder of the serine residue undergoes an oxidative deamination to produce ammonia and the pyruvoyl prosthetic group on the alpha chain.

The protein localises to the cell membrane. It carries out the reaction a 1,2-diacyl-sn-glycero-3-phospho-L-serine + H(+) = a 1,2-diacyl-sn-glycero-3-phosphoethanolamine + CO2. Its pathway is phospholipid metabolism; phosphatidylethanolamine biosynthesis; phosphatidylethanolamine from CDP-diacylglycerol: step 2/2. Catalyzes the formation of phosphatidylethanolamine (PtdEtn) from phosphatidylserine (PtdSer). The protein is Phosphatidylserine decarboxylase proenzyme of Rhodococcus opacus (strain B4).